A 726-amino-acid chain; its full sequence is Catalase-peroxidase (726 aa).

The segment at Met-1 to Ser-33 is disordered. Residues Trp-105–Tyr-226 constitute a cross-link (tryptophyl-tyrosyl-methioninium (Trp-Tyr) (with M-252)). The active-site Proton acceptor is the His-106. A cross-link (tryptophyl-tyrosyl-methioninium (Tyr-Met) (with W-105)) is located at residues Tyr-226–Met-252. His-267 provides a ligand contact to heme b.

This sequence belongs to the peroxidase family. Peroxidase/catalase subfamily. In terms of assembly, homodimer or homotetramer. Requires heme b as cofactor. Formation of the three residue Trp-Tyr-Met cross-link is important for the catalase, but not the peroxidase activity of the enzyme.

It carries out the reaction H2O2 + AH2 = A + 2 H2O. The catalysed reaction is 2 H2O2 = O2 + 2 H2O. In terms of biological role, bifunctional enzyme with both catalase and broad-spectrum peroxidase activity. This chain is Catalase-peroxidase, found in Salmonella schwarzengrund (strain CVM19633).